The primary structure comprises 93 residues: Large ribosomal subunit protein uL23cz/uL23cy (93 aa).

It belongs to the universal ribosomal protein uL23 family. As to quaternary structure, part of the 50S ribosomal subunit.

The protein resides in the plastid. Its subcellular location is the chloroplast. Binds to 23S rRNA. The sequence is that of Large ribosomal subunit protein uL23cz/uL23cy (rpl23-A) from Helianthus annuus (Common sunflower).